The primary structure comprises 646 residues: Lipoteichoic acid synthase (646 aa).

Residues 1–7 (MSSQKKK) lie on the Cytoplasmic side of the membrane. A helical transmembrane segment spans residues 8–28 (ISLFAFFLLTVITITLKTYFS). Over 29–43 (YYVDFSLGVKGLVQN) the chain is Extracellular. A helical transmembrane segment spans residues 44–64 (LILLMNPYSLVALVLSVFLFF). The Cytoplasmic portion of the chain corresponds to 65–68 (KGKK). The helical transmembrane segment at 69–89 (AFWFMFIGGFLLTFLLYANVV) threads the bilayer. Residues 90–119 (YFRFFSDFLTFSTLNQVGNVESMGGAVSAS) lie on the Extracellular side of the membrane. A helical transmembrane segment spans residues 120 to 140 (FKWYDFVYFIDTLVYLFILIF). Residues 141 to 153 (KTKWLDTKAFSKK) are Cytoplasmic-facing. Residues 154 to 174 (FVPVVMAASVALFFLNLAFAE) form a helical membrane-spanning segment. The Extracellular segment spans residues 175–646 (TDRPELLTRT…ETGPKANSKK (472 aa)). Positions 255 and 300 each coordinate Mn(2+). The active site involves threonine 300. Residue histidine 416 coordinates substrate. Residues aspartate 475 and histidine 476 each contribute to the Mn(2+) site. Residues 623–638 (NPDFKKVNPSKYKYET) are compositionally biased toward basic and acidic residues. The segment at 623-646 (NPDFKKVNPSKYKYETGPKANSKK) is disordered.

Belongs to the LTA synthase family. In terms of processing, proteolytically cleaved.

It is found in the cell membrane. Its subcellular location is the secreted. It participates in cell wall biogenesis; lipoteichoic acid biosynthesis. Its function is as follows. Catalyzes the polymerization of lipoteichoic acid (LTA) polyglycerol phosphate, a reaction that presumably uses phosphatidylglycerol (PG) as substrate. Is required for staphylococcal growth and cell division process. This chain is Lipoteichoic acid synthase (ltaS), found in Staphylococcus aureus (strain bovine RF122 / ET3-1).